Consider the following 355-residue polypeptide: Ion-translocating oxidoreductase complex subunit D (355 aa).

Transmembrane regions (helical) follow at residues 23 to 43 (WVAL…GWGT), 44 to 64 (LVQL…VMLF), 78 to 109 (ALVT…IVIA), and 129 to 149 (VVLL…LPLI). Thr-194 is modified (FMN phosphoryl threonine). 5 helical membrane-spanning segments follow: residues 221–241 (FAGV…LILL), 250–270 (IPVG…LFFP), 273–293 (TASP…FFIA), 307–327 (ILFG…GGFP), and 328–348 (DGVA…DYYT).

This sequence belongs to the NqrB/RnfD family. In terms of assembly, the complex is composed of six subunits: RnfA, RnfB, RnfC, RnfD, RnfE and RnfG. FMN is required as a cofactor.

The protein localises to the cell inner membrane. Its function is as follows. Part of a membrane-bound complex that couples electron transfer with translocation of ions across the membrane. This chain is Ion-translocating oxidoreductase complex subunit D, found in Vibrio vulnificus (strain CMCP6).